Here is a 645-residue protein sequence, read N- to C-terminus: 1-deoxy-D-xylulose-5-phosphate synthase (645 aa).

Thiamine diphosphate contacts are provided by residues His79 and 120 to 122; that span reads AHS. Asp155 provides a ligand contact to Mg(2+). Thiamine diphosphate contacts are provided by residues 156 to 157, Asn184, Tyr293, and Glu375; that span reads GA. Asn184 lines the Mg(2+) pocket.

It belongs to the transketolase family. DXPS subfamily. As to quaternary structure, homodimer. Mg(2+) is required as a cofactor. Requires thiamine diphosphate as cofactor.

The enzyme catalyses D-glyceraldehyde 3-phosphate + pyruvate + H(+) = 1-deoxy-D-xylulose 5-phosphate + CO2. It functions in the pathway metabolic intermediate biosynthesis; 1-deoxy-D-xylulose 5-phosphate biosynthesis; 1-deoxy-D-xylulose 5-phosphate from D-glyceraldehyde 3-phosphate and pyruvate: step 1/1. In terms of biological role, catalyzes the acyloin condensation reaction between C atoms 2 and 3 of pyruvate and glyceraldehyde 3-phosphate to yield 1-deoxy-D-xylulose-5-phosphate (DXP). The protein is 1-deoxy-D-xylulose-5-phosphate synthase of Ruegeria sp. (strain TM1040) (Silicibacter sp.).